A 310-amino-acid chain; its full sequence is Methionyl-tRNA formyltransferase (310 aa).

109–112 (SLLP) serves as a coordination point for (6S)-5,6,7,8-tetrahydrofolate.

It belongs to the Fmt family.

It carries out the reaction L-methionyl-tRNA(fMet) + (6R)-10-formyltetrahydrofolate = N-formyl-L-methionyl-tRNA(fMet) + (6S)-5,6,7,8-tetrahydrofolate + H(+). Its function is as follows. Attaches a formyl group to the free amino group of methionyl-tRNA(fMet). The formyl group appears to play a dual role in the initiator identity of N-formylmethionyl-tRNA by promoting its recognition by IF2 and preventing the misappropriation of this tRNA by the elongation apparatus. The polypeptide is Methionyl-tRNA formyltransferase (Pseudomonas entomophila (strain L48)).